A 402-amino-acid polypeptide reads, in one-letter code: Argininosuccinate synthase (402 aa).

8 to 16 (AYSGGLDTS) contributes to the ATP binding site. Tyr86 and Ser91 together coordinate L-citrulline. ATP is bound at residue Gly116. Residues Thr118, Asn122, and Asp123 each coordinate L-aspartate. Asn122 is a binding site for L-citrulline. Residues Arg126, Ser175, Ser184, Glu260, and Tyr272 each coordinate L-citrulline.

The protein belongs to the argininosuccinate synthase family. Type 1 subfamily. In terms of assembly, homotetramer.

The protein resides in the cytoplasm. The enzyme catalyses L-citrulline + L-aspartate + ATP = 2-(N(omega)-L-arginino)succinate + AMP + diphosphate + H(+). The protein operates within amino-acid biosynthesis; L-arginine biosynthesis; L-arginine from L-ornithine and carbamoyl phosphate: step 2/3. This chain is Argininosuccinate synthase, found in Clostridium novyi (strain NT).